A 198-amino-acid chain; its full sequence is GTP-binding protein RHO1 (198 aa).

16-23 (GDGACGKT) serves as a coordination point for GTP. The Effector region motif lies at 38–46 (YVPTVFENY). Residues 63-67 (DTAGQ) and 121-124 (CKSD) contribute to the GTP site. Cys-195 is subject to Cysteine methyl ester. Residue Cys-195 is the site of S-geranylgeranyl cysteine attachment. Positions 196–198 (VVL) are cleaved as a propeptide — removed in mature form.

The protein belongs to the small GTPase superfamily. Rho family.

It is found in the cell membrane. The polypeptide is GTP-binding protein RHO1 (RHO1) (Candida albicans (strain SC5314 / ATCC MYA-2876) (Yeast)).